A 503-amino-acid polypeptide reads, in one-letter code: DnaJ homolog subfamily C member 3 (503 aa).

An N-terminal signal peptide occupies residues 1-31; that stretch reads MVSAAASAGRLGSALPFLLVLLDLQYQGAEC. 9 TPR repeats span residues 37–70, 71–104, 105–137, 153–186, 187–220, 221–254, 267–300, 305–338, and 339–372; these read VEKQ…DSDN, YIAY…KQDF, TSRL…NPSN, LQRL…CVWD, AELR…KSDN, TEAF…DQDH, LNKQ…EPDV, TRAK…EPTN, and VNAL…SEND. C247 and C257 are oxidised to a cystine. C312 and C328 are oxidised to a cystine. Positions 374 to 392 are flexible linker; the sequence is QIREGLERAQRMLKQSQKR. One can recognise a J domain in the interval 393–461; that stretch reads DYYKILGVKR…EMRRKFDAGE (69 aa).

Its subcellular location is the endoplasmic reticulum. Functionally, may be involved in the unfolded protein response (UPR) during ER stress. The chain is DnaJ homolog subfamily C member 3 (DNAJC3) from Gallus gallus (Chicken).